The chain runs to 317 residues: COP9 signalosome complex subunit 6a (317 aa).

Positions 30–164 (TQLNPPASIC…VTIYESELHV (135 aa)) constitute an MPN domain.

Belongs to the peptidase M67A family. CSN6 subfamily. Component of the CSN complex, probably composed of CSN1, CSN2, CSN3, CSN4, CSN5 (CSN5A or CSN5B), CSN6 (CSN6A or CSN6B), CSN7 and CSN8. Interacts with itself. In the complex, it probably interacts directly with CSN4 and CSN5A or CSN5B. Interacts with CSN7 (via C-terminal tail). Binds to the translation initiation factors TIF3E1.

Its subcellular location is the cytoplasm. It is found in the nucleus. Functionally, component of the COP9 signalosome complex (CSN), a complex involved in various cellular and developmental processes such as photomorphogenesis and auxin and jasmonate responses. The CSN complex is an essential regulator of the ubiquitin (Ubl) conjugation pathway by mediating the deneddylation of the cullin subunits of SCF-type E3 ligase complexes, leading to decrease the Ubl ligase activity of SCF. It is involved in repression of photomorphogenesis in darkness by regulating the activity of COP1-containing Ubl ligase complexes. The complex is also required for degradation of PSIAA6 by regulating the activity of the Ubl ligase SCF-TIR complex. Essential for the structural integrity of the CSN holocomplex. The polypeptide is COP9 signalosome complex subunit 6a (Arabidopsis thaliana (Mouse-ear cress)).